Consider the following 226-residue polypeptide: Lipoprotein signal peptidase (226 aa).

3 helical membrane-spanning segments follow: residues lysine 12–valine 32, phenylalanine 69–valine 89, and serine 103–phenylalanine 123. Catalysis depends on residues aspartate 150 and aspartate 184. The chain crosses the membrane as a helical span at residues phenylalanine 173 to leucine 193.

Belongs to the peptidase A8 family.

It is found in the cell inner membrane. The catalysed reaction is Release of signal peptides from bacterial membrane prolipoproteins. Hydrolyzes -Xaa-Yaa-Zaa-|-(S,diacylglyceryl)Cys-, in which Xaa is hydrophobic (preferably Leu), and Yaa (Ala or Ser) and Zaa (Gly or Ala) have small, neutral side chains.. Its pathway is protein modification; lipoprotein biosynthesis (signal peptide cleavage). Its function is as follows. This protein specifically catalyzes the removal of signal peptides from prolipoproteins. In Porphyromonas gingivalis (strain ATCC 33277 / DSM 20709 / CIP 103683 / JCM 12257 / NCTC 11834 / 2561), this protein is Lipoprotein signal peptidase.